The following is a 196-amino-acid chain: ATP-dependent Clp protease proteolytic subunit (196 aa).

Ser-99 acts as the Nucleophile in catalysis. Residue His-124 is part of the active site.

The protein belongs to the peptidase S14 family. In terms of assembly, fourteen ClpP subunits assemble into 2 heptameric rings which stack back to back to give a disk-like structure with a central cavity, resembling the structure of eukaryotic proteasomes.

It is found in the cytoplasm. The catalysed reaction is Hydrolysis of proteins to small peptides in the presence of ATP and magnesium. alpha-casein is the usual test substrate. In the absence of ATP, only oligopeptides shorter than five residues are hydrolyzed (such as succinyl-Leu-Tyr-|-NHMec, and Leu-Tyr-Leu-|-Tyr-Trp, in which cleavage of the -Tyr-|-Leu- and -Tyr-|-Trp bonds also occurs).. Its function is as follows. Cleaves peptides in various proteins in a process that requires ATP hydrolysis. Has a chymotrypsin-like activity. Plays a major role in the degradation of misfolded proteins. The polypeptide is ATP-dependent Clp protease proteolytic subunit (Nitratiruptor sp. (strain SB155-2)).